A 334-amino-acid chain; its full sequence is L-lactate dehydrogenase C chain (334 aa).

Residues 30 to 58 (GQVGMACAVSVLLKELADELALVDILEDK), Arg100, and Asn139 contribute to the NAD(+) site. Substrate-binding residues include Asn139 and Arg170. The Proton acceptor role is filled by His194. Thr249 is a substrate binding site.

This sequence belongs to the LDH/MDH superfamily. LDH family. Homotetramer.

The protein localises to the cytoplasm. It catalyses the reaction (S)-lactate + NAD(+) = pyruvate + NADH + H(+). It participates in fermentation; pyruvate fermentation to lactate; (S)-lactate from pyruvate: step 1/1. This Xenopus laevis (African clawed frog) protein is L-lactate dehydrogenase C chain (ldhc).